The primary structure comprises 61 residues: Small ribosomal subunit protein uS14 (61 aa).

The Zn(2+) site is built by Cys-24, Cys-27, Cys-40, and Cys-43.

Belongs to the universal ribosomal protein uS14 family. Zinc-binding uS14 subfamily. In terms of assembly, part of the 30S ribosomal subunit. Contacts proteins S3 and S10. Requires Zn(2+) as cofactor.

Functionally, binds 16S rRNA, required for the assembly of 30S particles and may also be responsible for determining the conformation of the 16S rRNA at the A site. The chain is Small ribosomal subunit protein uS14 from Dehalococcoides mccartyi (strain ATCC BAA-2266 / KCTC 15142 / 195) (Dehalococcoides ethenogenes (strain 195)).